A 242-amino-acid polypeptide reads, in one-letter code: Probable transcriptional regulatory protein Cphy_2507 (242 aa).

It belongs to the TACO1 family.

It is found in the cytoplasm. This is Probable transcriptional regulatory protein Cphy_2507 from Lachnoclostridium phytofermentans (strain ATCC 700394 / DSM 18823 / ISDg) (Clostridium phytofermentans).